A 503-amino-acid chain; its full sequence is Maturase K (503 aa).

This sequence belongs to the intron maturase 2 family. MatK subfamily.

The protein resides in the plastid. It localises to the chloroplast. Usually encoded in the trnK tRNA gene intron. Probably assists in splicing its own and other chloroplast group II introns. The chain is Maturase K from Vicia sativa (Spring vetch).